A 387-amino-acid chain; its full sequence is Cytochrome b (387 aa).

A helical membrane pass occupies residues 32-52; that stretch reads LGSLLGLCLVIQIASGVFLAM. 2 residues coordinate heme b: His-82 and His-96. A run of 8 helical transmembrane segments spans residues 85 to 105, 116 to 136, 151 to 171, 179 to 199, 225 to 245, 289 to 309, 324 to 344, and 350 to 370; these read GASF…YYGS, IGVV…CLVY, LSAI…GFSV, FFAL…MHLM, FIFK…LFVF, LGGV…PYTD, LAFY…QLHV, and QLGQ…VPVI. Heme b-binding residues include His-183 and His-197.

It belongs to the cytochrome b family. Component of the ubiquinol-cytochrome c oxidoreductase (cytochrome b-c1 complex, complex III, CIII), a multisubunit enzyme composed of 10 subunits. The complex is composed of 3 respiratory subunits cytochrome b (COB), cytochrome c1 (CYT1) and Rieske protein (RIP1), 2 core protein subunits COR1 and QCR2, and 5 low-molecular weight protein subunits QCR6, QCR7, QCR8, QCR9 and QCR10. The complex exists as an obligatory dimer and forms supercomplexes (SCs) in the inner mitochondrial membrane with a monomer or a dimer of cytochrome c oxidase (complex IV, CIV), resulting in 2 different assemblies (supercomplexes III(2)IV and III(2)IV(2)). It depends on heme b as a cofactor.

It localises to the mitochondrion inner membrane. Functionally, component of the ubiquinol-cytochrome c oxidoreductase, a multisubunit transmembrane complex that is part of the mitochondrial electron transport chain which drives oxidative phosphorylation. The complex plays an important role in the uptake of multiple carbon sources present in different host niches. The sequence is that of Cytochrome b from Candida albicans (strain SC5314 / ATCC MYA-2876) (Yeast).